The chain runs to 165 residues: MERFIENAMYASRWLLAPVYFGLSLALLALTVKFFQEIIHVLPNILTIAEADLILLLLSLVDMTLVGGLLVMVMFSGYENFVSQLDIHEGKEKLSWLGKMDASSLKNKVAASIVAISSIHLLRVFMDAKNVPDNKLMWYVIIHLTFVLSAFVMGYLDKISRSKGY.

3 helical membrane passes run 15–35, 53–73, and 136–156; these read LLAPVYFGLSLALLALTVKFF, LILLLLSLVDMTLVGGLLVMV, and LMWYVIIHLTFVLSAFVMGYL.

The protein belongs to the UPF0114 family.

Its subcellular location is the cell membrane. This chain is UPF0114 protein ESA_00283, found in Cronobacter sakazakii (strain ATCC BAA-894) (Enterobacter sakazakii).